Consider the following 969-residue polypeptide: MFVVGQRWISESENNLGLGIVTASDNRTVTIQFPAAEEERIYALSVAPLTRVQFQKGDRINSVEGWQLDVEEVVENQGFIIYLGKRADSGEEAVLPEMQLDHKVSFSKPQDRLFSAQIDRSDRFALRYRALQHQQAQFQSPLRGMRGIRASLIPHQLHIAKEVGQRVAPRVLLADEVGLGKTIEAGMILQQQLFSGRVERVLVLVPESLQHQWLVEMLRRFNLKFSLFDEERCSDFDKADEDGNDVSENPFDSEALVIASIDWLESSPNRAKQVLASHWDMLIVDEAHHLAWSEDEPSVGYQFVERLSKQTPAVLLLTATPEQLGQESHFARLALLDADRFYDYHSFIAEQKDYKPVADAVATLLNDKPLSHDEQNSIAELLSEKDTEPMFKVINSEKSKENDRLQVRQELIRELIDRHGTSRVLFRNTRQGVKGFPHRVYHQITLEMPSQYTNALKVMGMMGGVTKDDQLYPERLFQRMNPAAKWADFDPRIEWLITFLKNHRDEKILVICKQADTAIALEQILREREAIRSAVFHEKMSIVERDRASAYFAQMEEGAQVLISSSIGSEGRNFQFASNLVLFNLPDNPDLLEQSIGRLDRIGQKNDIQIHVPCFENSMQMVLATWYHQGLNAFEETCPMGAALFREFGEELEGFLKNPQAVGFDEFLVRTFKRQQQLKAELEQGRDRLLELNSNGGEVAQALAEAIAKEDNNPHLVNFALSLFDVIGLEQEDLGEQSIVISPTGHMLVPDFPGIAEDGTTVTFDRQLALMREDVEFLTWDHPMIRNGIDLITSGYIGKSAISLLINKNLPAGTLLLEAIYMVETQAPKGLNLTRFLPPTPVRILLDNKGNDMAAQVSFAGLEKQLKPLNKQMANKIAKMAQADIKKLIGISEQKIAAKLPELIEKASQDADSTLSAELHRLTSLQAVNKNIRSDEIEALEQQRIESLKQIALANWRLDSLRVIVSNKE.

The region spanning 162 to 339 (EVGQRVAPRV…FARLALLDAD (178 aa)) is the Helicase ATP-binding domain. 175–182 (DEVGLGKT) is an ATP binding site. The DEAH box signature appears at 285–288 (DEAH). Residues 492-663 (RIEWLITFLK…GFLKNPQAVG (172 aa)) form the Helicase C-terminal domain.

Belongs to the SNF2/RAD54 helicase family. RapA subfamily. Interacts with the RNAP. Has a higher affinity for the core RNAP than for the holoenzyme. Its ATPase activity is stimulated by binding to RNAP.

Transcription regulator that activates transcription by stimulating RNA polymerase (RNAP) recycling in case of stress conditions such as supercoiled DNA or high salt concentrations. Probably acts by releasing the RNAP, when it is trapped or immobilized on tightly supercoiled DNA. Does not activate transcription on linear DNA. Probably not involved in DNA repair. The protein is RNA polymerase-associated protein RapA of Actinobacillus pleuropneumoniae serotype 7 (strain AP76).